Here is a 202-residue protein sequence, read N- to C-terminus: Probable GTP-binding protein EngB (202 aa).

Positions 22 to 197 (VFPEYAFIGR…LDYIENISKE (176 aa)) constitute an EngB-type G domain. Residues 30–37 (GRSNVGKS), 57–61 (GKTML), 75–78 (DLPG), 142–145 (TKAD), and 173–178 (YFISSS) each bind GTP. Mg(2+) is bound by residues S37 and T59.

The protein belongs to the TRAFAC class TrmE-Era-EngA-EngB-Septin-like GTPase superfamily. EngB GTPase family. Requires Mg(2+) as cofactor.

In terms of biological role, necessary for normal cell division and for the maintenance of normal septation. This chain is Probable GTP-binding protein EngB, found in Bacteroides thetaiotaomicron (strain ATCC 29148 / DSM 2079 / JCM 5827 / CCUG 10774 / NCTC 10582 / VPI-5482 / E50).